The sequence spans 167 residues: Phospholipase A and acyltransferase 1 (167 aa).

Residues 1–138 are Cytoplasmic-facing; it reads MAVNDCFSLT…GEGVSEQANR (138 aa). Residues 20–135 enclose the LRAT domain; that stretch reads LIEVFRPCYQ…LRYGEGVSEQ (116 aa). Residue H30 is part of the active site. C119 acts as the Acyl-thioester intermediate in catalysis. The chain crosses the membrane as a helical span at residues 139-159; sequence AIGTIGLVAAGIDIFTFLGLF. Topologically, residues 160 to 167 are lumenal; that stretch reads PKRQRTKY.

The protein belongs to the H-rev107 family. As to expression, expressed in skeletal muscle, heart, brain, bone marrow and testis. Abundantly expressed in brain, heart, and skeletal muscle.

It localises to the membrane. The protein resides in the cytoplasm. The protein localises to the nucleus. It catalyses the reaction a 1,2-diacyl-sn-glycero-3-phosphocholine + H2O = a 1-acyl-sn-glycero-3-phosphocholine + a fatty acid + H(+). The catalysed reaction is a 1,2-diacyl-sn-glycero-3-phosphocholine + H2O = a 2-acyl-sn-glycero-3-phosphocholine + a fatty acid + H(+). The enzyme catalyses 1,2-dihexadecanoyl-sn-glycero-3-phosphocholine + H2O = 2-hexadecanoyl-sn-glycero-3-phosphocholine + hexadecanoate + H(+). It carries out the reaction 1,2-dihexadecanoyl-sn-glycero-3-phosphocholine + H2O = 1-hexadecanoyl-sn-glycero-3-phosphocholine + hexadecanoate + H(+). It catalyses the reaction 1-hexadecanoyl-2-(5Z,8Z,11Z,14Z-eicosatetraenoyl)-sn-glycero-3-phosphoethanolamine + H2O = 2-(5Z,8Z,11Z,14Z)-eicosatetraenoyl-sn-glycero-3-phosphoethanolamine + hexadecanoate + H(+). The catalysed reaction is 1-hexadecanoyl-2-(5Z,8Z,11Z,14Z-eicosatetraenoyl)-sn-glycero-3-phosphoethanolamine + H2O = 1-hexadecanoyl-sn-glycero-3-phosphoethanolamine + (5Z,8Z,11Z,14Z)-eicosatetraenoate + H(+). The enzyme catalyses 1,2-di-(9Z-octadecenoyl)-sn-glycero-3-phosphoethanolamine + 1,2-dihexadecanoyl-sn-glycero-3-phosphocholine = hexadecanoyl-sn-glycero-3-phosphocholine + N-hexadecanoyl-1,2-di-(9Z-octadecenoyl)-sn-glycero-3-phosphoethanolamine + H(+). It carries out the reaction 1,2-dihexadecanoyl-sn-glycero-3-phosphocholine + a 2-acyl-sn-glycero-3-phosphocholine = a 1-hexadecanoyl-2-acyl-sn-glycero-3-phosphocholine + 2-hexadecanoyl-sn-glycero-3-phosphocholine. Exhibits both phospholipase A1/2 and acyltransferase activities. Shows phospholipase A1 (PLA1) and A2 (PLA2) activity, catalyzing the calcium-independent release of fatty acids from the sn-1 or sn-2 position of glycerophospholipids. Shows O-acyltransferase activity, catalyzing the transfer of a fatty acyl group from glycerophospholipid to the hydroxyl group of lysophospholipid. Shows N-acyltransferase activity, catalyzing the calcium-independent transfer of a fatty acyl group at the sn-1 position of phosphatidylcholine (PC) and other glycerophospholipids to the primary amine of phosphatidylethanolamine (PE), forming N-acylphosphatidylethanolamine (NAPE), which serves as precursor for N-acylethanolamines (NAEs). This Mus musculus (Mouse) protein is Phospholipase A and acyltransferase 1.